The primary structure comprises 237 residues: uncharacterized protein (237 aa).

Residues Gln-4 to Tyr-237 enclose the GP-PDE domain.

This sequence to glycerophosphoryl diester phosphodiesterases (EC 3.1.4.46). To M.genitalium MG293.

This is an uncharacterized protein from Mycoplasma pneumoniae (strain ATCC 29342 / M129 / Subtype 1) (Mycoplasmoides pneumoniae).